Reading from the N-terminus, the 869-residue chain is DNA mismatch repair protein MutS (869 aa).

Residue 619-626 (GPNMAGKS) coordinates ATP.

Belongs to the DNA mismatch repair MutS family.

This protein is involved in the repair of mismatches in DNA. It is possible that it carries out the mismatch recognition step. This protein has a weak ATPase activity. This Caldanaerobacter subterraneus subsp. tengcongensis (strain DSM 15242 / JCM 11007 / NBRC 100824 / MB4) (Thermoanaerobacter tengcongensis) protein is DNA mismatch repair protein MutS.